We begin with the raw amino-acid sequence, 290 residues long: Endoplasmic reticulum-Golgi intermediate compartment protein 1 (290 aa).

Over 1–26 (MPFDFRRFDIYRKVPKDLTQPTYTGA) the chain is Cytoplasmic. Residues 27 to 47 (IISICCCLFILFLFLSELTGF) traverse the membrane as a helical segment. Over 48-254 (ITTEVVNELY…RRQPLYRFIT (207 aa)) the chain is Lumenal. An N-linked (GlcNAc...) asparagine glycan is attached at Asn-74. Residues 255–275 (TICAIIGGTFTVAGILDSCIF) form a helical membrane-spanning segment. Residues 276-290 (TASEAWKKIQLGKMH) are Cytoplasmic-facing.

The protein belongs to the ERGIC family. May form a heteromeric complex composed of ERGIC1, ERGIC2 and ERGIC3. Within the complex, the interaction with ERGIC3 is direct. Interacts with ERGIC3/ERV46. N-glycosylated.

The protein resides in the endoplasmic reticulum membrane. It localises to the endoplasmic reticulum-Golgi intermediate compartment membrane. The protein localises to the golgi apparatus membrane. In terms of biological role, possible role in transport between endoplasmic reticulum and Golgi. The chain is Endoplasmic reticulum-Golgi intermediate compartment protein 1 (ERGIC1) from Homo sapiens (Human).